The chain runs to 154 residues: Myoglobin (154 aa).

One can recognise a Globin domain in the interval 2–148; that stretch reads GLSDGEWQLV…FRNEMAAQYK (147 aa). Residue S4 is modified to Phosphoserine. H65 contacts nitrite. Residue H65 participates in O2 binding. T68 is modified (phosphothreonine). H94 provides a ligand contact to heme b.

In terms of assembly, monomeric.

Its subcellular location is the cytoplasm. The protein localises to the sarcoplasm. It catalyses the reaction Fe(III)-heme b-[protein] + nitric oxide + H2O = Fe(II)-heme b-[protein] + nitrite + 2 H(+). It carries out the reaction H2O2 + AH2 = A + 2 H2O. Functionally, monomeric heme protein which primary function is to store oxygen and facilitate its diffusion within muscle tissues. Reversibly binds oxygen through a pentacoordinated heme iron and enables its timely and efficient release as needed during periods of heightened demand. Depending on the oxidative conditions of tissues and cells, and in addition to its ability to bind oxygen, it also has a nitrite reductase activity whereby it regulates the production of bioactive nitric oxide. Under stress conditions, like hypoxia and anoxia, it also protects cells against reactive oxygen species thanks to its pseudoperoxidase activity. This is Myoglobin from Bubalus bubalis (Domestic water buffalo).